A 338-amino-acid polypeptide reads, in one-letter code: Protein FosB (338 aa).

Disordered regions lie at residues 1 to 54 (MFQA…PGSF) and 80 to 179 (AQSQ…RREL). Composition is skewed to polar residues over residues 13 to 31 (SRCS…SVDS) and 102 to 112 (TSYSTPGLSAY). S27 carries the phosphoserine modification. Positions 123–137 (PSTSTTTSGPVSARP) are enriched in low complexity. In terms of domain architecture, bZIP spans 155–218 (EEKRRVRRER…ERLEFVLVAH (64 aa)). A basic motif region spans residues 157–182 (KRRVRRERNKLAAAKCRNRRRELTDR). Residues 183-211 (LQAETDQLEEEKAELESEIAELQKEKERL) form a leucine-zipper region. Disordered stretches follow at residues 222 to 276 (CKIP…PPNL) and 316 to 338 (GAQR…LLAL). The span at 256–265 (LPPPPPPPLP) shows a compositional bias: pro residues. Composition is skewed to polar residues over residues 266-276 (FQSSRDAPPNL) and 318-338 (QRTS…LLAL).

The protein belongs to the bZIP family. Fos subfamily. In terms of assembly, heterodimer; binds to DNA as heterodimer. Component of an AP-1 transcription factor complex; composed of FOS-JUN heterodimers. As part of the AP-1 transcription factor complex, forms heterodimers with JUN, JUNB or JUND, thereby binding to the AP-1 consensus sequence and stimulating transcription. Interacts with the BAF multiprotein chromatin-remodeling complex subunits SMARCB1 and SMARCD1. Interacts with ARID1A and JUN. Homodimer under oxidizing conditions and monomer under reducing conditions (in vitro). Heterodimer; binds to DNA as heterodimer. Forms heterodimers with JUNB, JUN or JUND; thereby binding to the AP-1 consensus sequence but does not stimulate transcription. Forms heterodimers with JUND under oxidizing conditions. In terms of processing, phosphorylated. Post-translationally, phosphorylated at Ser-27 by CSNK2A1; phosphorylation increases protein stability and transactivation potential. Expressed in brain, including the preoptic area of the hypothalamus, the main and accessory olfactory bulbs, the pyriform cortex and the hippocampus (at protein level). Expressed in the neurons of the subgranular zone of the dentate gyrus in the hippocampus (at protein level). Expressed in pyramidal cells in CA1 and CA3, in the dentate gyrus and the nucleus accumbens of the striatum (at protein level). In terms of tissue distribution, expressed in the core and shell of the nucleus accumbens of the striatum (at protein level). Expressed in the neurons of the subgranular zone of the dentate gyrus in the hippocampus (at protein level).

The protein resides in the nucleus. Heterodimerizes with proteins of the JUN family to form an AP-1 transcription factor complex, thereby enhancing their DNA binding activity to gene promoters containing an AP-1 consensus sequence 5'-TGA[GC]TCA-3' and enhancing their transcriptional activity. As part of the AP-1 complex, facilitates enhancer selection together with cell-type-specific transcription factors by collaboratively binding to nucleosomal enhancers and recruiting the SWI/SNF (BAF) chromatin remodeling complex to establish accessible chromatin. Together with JUN, plays a role in activation-induced cell death of T cells by binding to the AP-1 promoter site of FASLG/CD95L, and inducing its transcription in response to activation of the TCR/CD3 signaling pathway. Exhibits transactivation activity in vitro. Involved in the display of nurturing behavior towards newborns. May play a role in neurogenesis in the hippocampus and in learning and memory-related tasks by regulating the expression of various genes involved in neurogenesis, depression and epilepsy. Implicated in behavioral responses related to morphine reward and spatial memory. In terms of biological role, exhibits lower transactivation activity than isoform 1 in vitro. The heterodimer with JUN does not display any transcriptional activity, and may thereby act as an transcriptional inhibitor. May be involved in the regulation of neurogenesis in the hippocampus. May play a role in synaptic modifications in nucleus accumbens medium spiny neurons and thereby play a role in adaptive and pathological reward-dependent learning, including maladaptive responses involved in drug addiction. Seems to be more stably expressed with a half-life of ~9.5 hours in cell culture as compared to 1.5 hours half-life of isoform 1. This chain is Protein FosB, found in Mus musculus (Mouse).